The chain runs to 376 residues: Putative E3 ubiquitin-protein ligase XBAT34 (376 aa).

2 ANK repeats span residues 41-71 (LGRT…NVNA) and 77-106 (NGGT…NPLV). Residues 325 to 364 (CVICVDAPSEAVCVPCGHVAGCISCLKEIENKKMGCPVCR) form an RING-type zinc finger.

The catalysed reaction is S-ubiquitinyl-[E2 ubiquitin-conjugating enzyme]-L-cysteine + [acceptor protein]-L-lysine = [E2 ubiquitin-conjugating enzyme]-L-cysteine + N(6)-ubiquitinyl-[acceptor protein]-L-lysine.. It functions in the pathway protein modification; protein ubiquitination. Its function is as follows. No E3 ubiquitin-protein ligase activity observed when associated with the E2 enzyme UBC8 in vitro. This is Putative E3 ubiquitin-protein ligase XBAT34 (XBAT34) from Arabidopsis thaliana (Mouse-ear cress).